We begin with the raw amino-acid sequence, 162 residues long: 2-C-methyl-D-erythritol 2,4-cyclodiphosphate synthase (162 aa).

The a divalent metal cation site is built by Asp8 and His10. Residues 8 to 10 and 34 to 35 contribute to the 4-CDP-2-C-methyl-D-erythritol 2-phosphate site; these read DVH and HS. His42 contacts a divalent metal cation. 4-CDP-2-C-methyl-D-erythritol 2-phosphate is bound by residues 56–58, 61–65, 132–135, Phe139, and Lys142; these read DIG, FPDND, and TTTE.

It belongs to the IspF family. As to quaternary structure, homotrimer. A divalent metal cation serves as cofactor.

It carries out the reaction 4-CDP-2-C-methyl-D-erythritol 2-phosphate = 2-C-methyl-D-erythritol 2,4-cyclic diphosphate + CMP. The protein operates within isoprenoid biosynthesis; isopentenyl diphosphate biosynthesis via DXP pathway; isopentenyl diphosphate from 1-deoxy-D-xylulose 5-phosphate: step 4/6. In terms of biological role, involved in the biosynthesis of isopentenyl diphosphate (IPP) and dimethylallyl diphosphate (DMAPP), two major building blocks of isoprenoid compounds. Catalyzes the conversion of 4-diphosphocytidyl-2-C-methyl-D-erythritol 2-phosphate (CDP-ME2P) to 2-C-methyl-D-erythritol 2,4-cyclodiphosphate (ME-CPP) with a corresponding release of cytidine 5-monophosphate (CMP). The polypeptide is 2-C-methyl-D-erythritol 2,4-cyclodiphosphate synthase (Pelotomaculum thermopropionicum (strain DSM 13744 / JCM 10971 / SI)).